The primary structure comprises 833 residues: AdoMet-dependent rRNA methyltransferase SPB1 (833 aa).

G59, W61, D79, D95, and D120 together coordinate S-adenosyl-L-methionine. The active-site Proton acceptor is the K160. Coiled coils occupy residues 348–389 (EEEQ…QLNM) and 453–481 (RDELAEADELESQLDAMYSNYKERKSERD). Positions 477 to 493 (KSERDAKFRAKQARESS) are enriched in basic and acidic residues. Disordered regions lie at residues 477–532 (KSER…SDDD), 592–645 (KRKL…EKHS), and 776–810 (VTKKAKQKPKVTVVVASGKNRGLSGRPKGVKGKYK). Composition is skewed to acidic residues over residues 505–532 (QSDEENEEETKDYVDDDDNSDLSDSDDD) and 622–634 (EDGDVDSEYDSEE). Over residues 635–645 (EAKRTKQEKHS) the composition is skewed to basic and acidic residues. Residues 730–782 (AEAKARKKHRAVARLEKLKKKAGLINDDSDKSEKDKAEEIAKLMRKVTKKAKQ) adopt a coiled-coil conformation.

The protein belongs to the class I-like SAM-binding methyltransferase superfamily. RNA methyltransferase RlmE family. SPB1 subfamily. As to quaternary structure, component of the nucleolar and nucleoplasmic pre-60S ribosomal particle.

The protein localises to the nucleus. The protein resides in the nucleolus. It catalyses the reaction a ribonucleotide in rRNA + S-adenosyl-L-methionine = a 2'-O-methylribonucleotide in rRNA + S-adenosyl-L-homocysteine + H(+). In terms of biological role, required for proper assembly of pre-ribosomal particles during the biogenesis of the 60S ribosomal subunit. The sequence is that of AdoMet-dependent rRNA methyltransferase SPB1 from Kluyveromyces lactis (strain ATCC 8585 / CBS 2359 / DSM 70799 / NBRC 1267 / NRRL Y-1140 / WM37) (Yeast).